The primary structure comprises 201 residues: dTTP/UTP pyrophosphatase (201 aa).

The active-site Proton acceptor is the D75.

This sequence belongs to the Maf family. YhdE subfamily. The cofactor is a divalent metal cation.

The protein resides in the cytoplasm. The catalysed reaction is dTTP + H2O = dTMP + diphosphate + H(+). It carries out the reaction UTP + H2O = UMP + diphosphate + H(+). Functionally, nucleoside triphosphate pyrophosphatase that hydrolyzes dTTP and UTP. May have a dual role in cell division arrest and in preventing the incorporation of modified nucleotides into cellular nucleic acids. The protein is dTTP/UTP pyrophosphatase of Pseudomonas fluorescens (strain ATCC BAA-477 / NRRL B-23932 / Pf-5).